The sequence spans 344 residues: Holliday junction branch migration complex subunit RuvB (344 aa).

The segment at 1-182 is large ATPase domain (RuvB-L); sequence MRIEALNTAP…FGINSRLDYY (182 aa). ATP-binding positions include I21, R22, G63, K66, T67, T68, 129-131, R172, Y182, and R219; that span reads EDY. A Mg(2+)-binding site is contributed by T67. The tract at residues 183 to 253 is small ATPAse domain (RuvB-S); it reads NPELLQSIII…VARRTLESLE (71 aa). A head domain (RuvB-H) region spans residues 256 to 344; that stretch reads EGGLDDMDKK…GSLFDTAEDG (89 aa). DNA contacts are provided by R311 and R316.

Belongs to the RuvB family. Homohexamer. Forms an RuvA(8)-RuvB(12)-Holliday junction (HJ) complex. HJ DNA is sandwiched between 2 RuvA tetramers; dsDNA enters through RuvA and exits via RuvB. An RuvB hexamer assembles on each DNA strand where it exits the tetramer. Each RuvB hexamer is contacted by two RuvA subunits (via domain III) on 2 adjacent RuvB subunits; this complex drives branch migration. In the full resolvosome a probable DNA-RuvA(4)-RuvB(12)-RuvC(2) complex forms which resolves the HJ.

Its subcellular location is the cytoplasm. The enzyme catalyses ATP + H2O = ADP + phosphate + H(+). The RuvA-RuvB-RuvC complex processes Holliday junction (HJ) DNA during genetic recombination and DNA repair, while the RuvA-RuvB complex plays an important role in the rescue of blocked DNA replication forks via replication fork reversal (RFR). RuvA specifically binds to HJ cruciform DNA, conferring on it an open structure. The RuvB hexamer acts as an ATP-dependent pump, pulling dsDNA into and through the RuvAB complex. RuvB forms 2 homohexamers on either side of HJ DNA bound by 1 or 2 RuvA tetramers; 4 subunits per hexamer contact DNA at a time. Coordinated motions by a converter formed by DNA-disengaged RuvB subunits stimulates ATP hydrolysis and nucleotide exchange. Immobilization of the converter enables RuvB to convert the ATP-contained energy into a lever motion, pulling 2 nucleotides of DNA out of the RuvA tetramer per ATP hydrolyzed, thus driving DNA branch migration. The RuvB motors rotate together with the DNA substrate, which together with the progressing nucleotide cycle form the mechanistic basis for DNA recombination by continuous HJ branch migration. Branch migration allows RuvC to scan DNA until it finds its consensus sequence, where it cleaves and resolves cruciform DNA. The protein is Holliday junction branch migration complex subunit RuvB of Chlorobaculum tepidum (strain ATCC 49652 / DSM 12025 / NBRC 103806 / TLS) (Chlorobium tepidum).